Reading from the N-terminus, the 519-residue chain is NADH dehydrogenase (519 aa).

The tract at residues 1 to 183 is membrane-binding; sequence MVLEPQIKSQ…YLNGESFTSG (183 aa). The tract at residues 184–519 is catalytic; that stretch reads RMTVEEILAQ…TTPAESAAAK (336 aa). Position 210–241 (210–241) interacts with FAD; sequence DVLVVGGGPAGASSAIYAARKGIRTGIVADRF. Cysteine 337 and cysteine 340 are disulfide-bonded. Residue 349 to 379 participates in NAD(+) binding; that stretch reads DVAVIGGGNSGVEAAIDLAGIVNHVTVLEFM. Residue 469-479 participates in FAD binding; sequence TNVPGVFAAGD.

Belongs to the class-II pyridine nucleotide-disulfide oxidoreductase family. As to quaternary structure, homodimer. FAD is required as a cofactor.

The protein resides in the cell membrane. The enzyme catalyses a ubiquinone + NADH + 5 H(+)(in) = a ubiquinol + NAD(+) + 4 H(+)(out). Its function is as follows. Transfer of electrons from NADH to the respiratory chain. The immediate electron acceptor for the enzyme is believed to be ubiquinone. This chain is NADH dehydrogenase (ahpF), found in Ferdinandcohnia aciditolerans (strain JCM 32973 / CCTCC AB 2017280 / YN-1) (Bacillus aciditolerans).